A 482-amino-acid polypeptide reads, in one-letter code: ATP synthase subunit beta, chloroplastic (482 aa).

ATP is bound at residue 162–169 (GGAGVGKT).

It belongs to the ATPase alpha/beta chains family. In terms of assembly, F-type ATPases have 2 components, CF(1) - the catalytic core - and CF(0) - the membrane proton channel. CF(1) has five subunits: alpha(3), beta(3), gamma(1), delta(1), epsilon(1). CF(0) has four main subunits: a(1), b(1), b'(1) and c(9-12).

The protein localises to the plastid. It is found in the chloroplast thylakoid membrane. The catalysed reaction is ATP + H2O + 4 H(+)(in) = ADP + phosphate + 5 H(+)(out). Its function is as follows. Produces ATP from ADP in the presence of a proton gradient across the membrane. The catalytic sites are hosted primarily by the beta subunits. This chain is ATP synthase subunit beta, chloroplastic, found in Pleurastrum terricola (Filamentous green alga).